Consider the following 267-residue polypeptide: tRNA-cytidine(32) 2-sulfurtransferase 1 (267 aa).

The short motif at 42 to 47 is the PP-loop motif element; the sequence is SGGKDS. [4Fe-4S] cluster is bound by residues cysteine 117, cysteine 120, and cysteine 208.

This sequence belongs to the TtcA family. Homodimer. It depends on Mg(2+) as a cofactor. The cofactor is [4Fe-4S] cluster.

The protein resides in the cytoplasm. It catalyses the reaction cytidine(32) in tRNA + S-sulfanyl-L-cysteinyl-[cysteine desulfurase] + AH2 + ATP = 2-thiocytidine(32) in tRNA + L-cysteinyl-[cysteine desulfurase] + A + AMP + diphosphate + H(+). Its pathway is tRNA modification. Functionally, catalyzes the ATP-dependent 2-thiolation of cytidine in position 32 of tRNA, to form 2-thiocytidine (s(2)C32). The sulfur atoms are provided by the cysteine/cysteine desulfurase (IscS) system. The polypeptide is tRNA-cytidine(32) 2-sulfurtransferase 1 (Francisella tularensis subsp. tularensis (strain FSC 198)).